The chain runs to 356 residues: 3-dehydroquinate synthase (356 aa).

Residues 69–74, 103–107, 127–128, Lys140, Lys149, and 167–170 each bind NAD(+); these read DGEKFK, GVIGD, TT, and CLKT. Zn(2+) contacts are provided by Glu182, His245, and His262.

Belongs to the sugar phosphate cyclases superfamily. Dehydroquinate synthase family. Requires Co(2+) as cofactor. The cofactor is Zn(2+). NAD(+) is required as a cofactor.

It localises to the cytoplasm. The catalysed reaction is 7-phospho-2-dehydro-3-deoxy-D-arabino-heptonate = 3-dehydroquinate + phosphate. It functions in the pathway metabolic intermediate biosynthesis; chorismate biosynthesis; chorismate from D-erythrose 4-phosphate and phosphoenolpyruvate: step 2/7. In terms of biological role, catalyzes the conversion of 3-deoxy-D-arabino-heptulosonate 7-phosphate (DAHP) to dehydroquinate (DHQ). This Psychromonas ingrahamii (strain DSM 17664 / CCUG 51855 / 37) protein is 3-dehydroquinate synthase.